Consider the following 260-residue polypeptide: Tropinone reductase homolog At1g07450 (260 aa).

14–38 (LVTGGSKGIGYAIVEELVGFGARVH) lines the NADP(+) pocket. Position 147 (S147) interacts with substrate. Catalysis depends on Y159, which acts as the Proton acceptor.

It belongs to the short-chain dehydrogenases/reductases (SDR) family. SDR65C subfamily.

The polypeptide is Tropinone reductase homolog At1g07450 (Arabidopsis thaliana (Mouse-ear cress)).